The following is a 435-amino-acid chain: MNPRLFSPHIIRSLLDLDAYKINMMQAIHHFYPDVSVRYELIVRSEEDASGLLDAIRQEIAHLGTLRFSDADIHYLTQHAPHLKATFLQSLRYFHFVPQEQVEMGIVKQGGKQQLRISIRGSWRDTILYETLVMAIVSEVRSRQRWAEVPADLPLKVLKTKLDQLKAEIERRGINNFSLTEMGTRRRFSSQVQRDVLACLKQEIPQWVLGTSNYHFAREFDLKPIGTIAHEWFMGHQALVNERDSQQVALERWLTAFDGMLAIAPTDTLTIDAFLNDFNRHLANAYDGVRHDSGCPFRWGDKMIAHYQQLGIDPTTKLFIFSDGLDFDQALELCEYFAGRVKISFGIGTFLTNDLANWRNAAGVEYRPLSIVIKLAECQGRPVAKISDQPEKAMCEDPIFLANLKRRFNIELDVDALIQELRHQKRSPRHYISAA.

The residue at position 230 (His-230) is a Phosphohistidine; by autocatalysis.

This sequence belongs to the NAPRTase family. In terms of processing, transiently phosphorylated on a His residue during the reaction cycle. Phosphorylation strongly increases the affinity for substrates and increases the rate of nicotinate D-ribonucleotide production. Dephosphorylation regenerates the low-affinity form of the enzyme, leading to product release.

It catalyses the reaction nicotinate + 5-phospho-alpha-D-ribose 1-diphosphate + ATP + H2O = nicotinate beta-D-ribonucleotide + ADP + phosphate + diphosphate. It functions in the pathway cofactor biosynthesis; NAD(+) biosynthesis; nicotinate D-ribonucleotide from nicotinate: step 1/1. Catalyzes the synthesis of beta-nicotinate D-ribonucleotide from nicotinate and 5-phospho-D-ribose 1-phosphate at the expense of ATP. The polypeptide is Nicotinate phosphoribosyltransferase (Vibrio cholerae serotype O1 (strain ATCC 39541 / Classical Ogawa 395 / O395)).